Here is a 787-residue protein sequence, read N- to C-terminus: Endonuclease MutS2 (787 aa).

ATP is bound at residue glycine 331 to threonine 338. A Smr domain is found at isoleucine 711–arginine 786.

Belongs to the DNA mismatch repair MutS family. MutS2 subfamily. In terms of assembly, homodimer. Binds to stalled ribosomes, contacting rRNA.

Functionally, endonuclease that is involved in the suppression of homologous recombination and thus may have a key role in the control of bacterial genetic diversity. Its function is as follows. Acts as a ribosome collision sensor, splitting the ribosome into its 2 subunits. Detects stalled/collided 70S ribosomes which it binds and splits by an ATP-hydrolysis driven conformational change. Acts upstream of the ribosome quality control system (RQC), a ribosome-associated complex that mediates the extraction of incompletely synthesized nascent chains from stalled ribosomes and their subsequent degradation. Probably generates substrates for RQC. The polypeptide is Endonuclease MutS2 (Caldicellulosiruptor saccharolyticus (strain ATCC 43494 / DSM 8903 / Tp8T 6331)).